A 142-amino-acid polypeptide reads, in one-letter code: Hemoglobin subunit zeta (142 aa).

Position 2 is an N-acetylserine (Ser2). A Globin domain is found at 2–142 (SLTKAERTMV…VSSVLTEKYR (141 aa)). Ser53 carries the post-translational modification Phosphoserine. His59 is a binding site for heme b. At Ser73 the chain carries Phosphoserine. His88 provides a ligand contact to heme b.

This sequence belongs to the globin family. Heterotetramer of two zeta chains and beta-type chains.

The zeta chain is an alpha-type chain of mammalian embryonic hemoglobin. This chain is Hemoglobin subunit zeta (HBZ1), found in Equus caballus (Horse).